The chain runs to 455 residues: GTPase Der (455 aa).

2 consecutive EngA-type G domains span residues 4-174 (PIVA…PAGQ) and 183-358 (LKIA…SERN). Residues 10-17 (GRPNVGKS), 57-61 (DTAGL), 126-129 (NKAD), 189-196 (GRPNVGKS), 236-240 (DTAGI), and 301-304 (NKWD) contribute to the GTP site. A KH-like domain is found at 359 to 444 (KRVSTSDINN…PIILVFKGRE (86 aa)).

The protein belongs to the TRAFAC class TrmE-Era-EngA-EngB-Septin-like GTPase superfamily. EngA (Der) GTPase family. In terms of assembly, associates with the 50S ribosomal subunit.

Functionally, GTPase that plays an essential role in the late steps of ribosome biogenesis. In Herpetosiphon aurantiacus (strain ATCC 23779 / DSM 785 / 114-95), this protein is GTPase Der.